Reading from the N-terminus, the 751-residue chain is MTSAVELTDDLVKEYLTFRGFTNTLKYFEVDIKADKDKGFRVDRIVEQLLQFVQSYDLNGLVEYWAYLERRLFSRLEDVYRPTIHKLKTSLFRYYLVYTIQSSRTDKAHEFFQKQATELQNQAEWKEWFALPFLPTPDSNRTFSTYFSRQWADTFTVSLHNFLSVLFQCMPVPKILTFQSDYQKIACLQEENEIMRQKLFALQAETYRLRKDGPSEPLVLHKLPHYVSNMDRLGDSELGSNIMSSHSNTNMNTPSQRTSGFLSSLLAQNKKPPPPKSTLPSVSSPTQSGGSVPLKKEVAVSQAQKAKELVGGTKEVRSSPNILGVPGTESSMVQQRHKRQQERKELLSKTASQVSTEKKAENSDADPDLRSDTQNDTVDAVTRGSGASGARKEEKPAQPFIVLSQDEYAEHHSSIMHCRVDCSGRRVASLDVDGVIKIWSLDGIMQTKASAISKSALLSLEWATKRDRLLLLGSEVGTVRLYDTEAKKNLCEIGIVEDMPRILSLACSPSGASFVCSAAAATSPSQTDPTYYSYGESGNNQVPGKLLLWDTKTMKQQLQFSLEPVPIAVNCTAFNHNGNLLVTGAADGFIRLFDMQQHQCALSWKAHMGEVYSVDFSYDENAVYSIGEDGKFIQWDIHKSGQKVSEYSLPSDATGPFMLSGYSGYKQVQFPRGRLFAFDSEGKYMLTCSSTGGVIYKLNSDGSTLENCLSLGGHRAPVVTVDWSTAVECGTCLTASMDGKIKLTTLLAQKS.

Residues 183-205 (QKIACLQEENEIMRQKLFALQAE) are a coiled coil. A disordered region spans residues 237 to 398 (ELGSNIMSSH…GARKEEKPAQ (162 aa)). Over residues 238 to 267 (LGSNIMSSHSNTNMNTPSQRTSGFLSSLLA) the composition is skewed to polar residues. Residues 356–373 (TEKKAENSDADPDLRSDT) show a composition bias toward basic and acidic residues. WD repeat units follow at residues 410-449 (EHHS…QTKA), 452-492 (ISKS…NLCE), 517-559 (SAAA…QQLQ), 564-603 (PVPI…CALS), 606-645 (AHMG…QKVS), 668-706 (VQFP…STLE), and 713-751 (GHRA…AQKS).

This sequence belongs to the WD repeat WDR91 family.

The protein localises to the early endosome membrane. It is found in the late endosome membrane. Functionally, functions as a negative regulator of the PI3 kinase/PI3K activity associated with endosomal membranes. By modifying the phosphatidylinositol 3-phosphate/PtdInsP3 content of endosomal membranes may regulate endosome fusion, recycling, sorting and early to late endosome transport. In Xenopus tropicalis (Western clawed frog), this protein is WD repeat-containing protein 91.